The chain runs to 116 residues: Protein Rev (116 aa).

2 positions are modified to phosphoserine; by host CK2: Ser5 and Ser8. The homomultimerization stretch occupies residues 18 to 26 (LIKFLYQSN). The interval 23–49 (YQSNPPPNPEGTRQARRNRRRRWRERQ) is disordered. A Nuclear localization signal and RNA-binding (RRE) motif is present at residues 34–50 (TRQARRNRRRRWRERQR). Over residues 36–47 (QARRNRRRRWRE) the composition is skewed to basic residues. Positions 73 to 84 (LQLPPLERLTLD) match the Nuclear export signal and binding to XPO1 motif. Ser92 and Ser99 each carry phosphoserine; by host.

This sequence belongs to the HIV-1 REV protein family. Homomultimer; when bound to the RRE. Multimeric assembly is essential for activity and may involve XPO1. Binds to human KPNB1, XPO1, TNPO1, RANBP5 and IPO7. Interacts with the viral Integrase. Interacts with human KHDRBS1. Interacts with human NAP1; this interaction decreases Rev multimerization and stimulates its activity. Interacts with human DEAD-box helicases DDX3 and DDX24; these interactions may serve for viral RNA export to the cytoplasm and packaging, respectively. Interacts with human PSIP1; this interaction may inhibit HIV-1 DNA integration by promoting dissociation of the Integrase-LEDGF/p75 complex. Asymmetrically arginine dimethylated at one site by host PRMT6. Methylation impairs the RNA-binding activity and export of viral RNA from the nucleus to the cytoplasm. Post-translationally, phosphorylated by protein kinase CK2. Presence of, and maybe binding to the N-terminus of the regulatory beta subunit of CK2 is necessary for CK2-mediated Rev's phosphorylation.

Its subcellular location is the host nucleus. The protein localises to the host nucleolus. The protein resides in the host cytoplasm. In terms of biological role, escorts unspliced or incompletely spliced viral pre-mRNAs (late transcripts) out of the nucleus of infected cells. These pre-mRNAs carry a recognition sequence called Rev responsive element (RRE) located in the env gene, that is not present in fully spliced viral mRNAs (early transcripts). This function is essential since most viral proteins are translated from unspliced or partially spliced pre-mRNAs which cannot exit the nucleus by the pathway used by fully processed cellular mRNAs. Rev itself is translated from a fully spliced mRNA that readily exits the nucleus. Rev's nuclear localization signal (NLS) binds directly to KPNB1/Importin beta-1 without previous binding to KPNA1/Importin alpha-1. KPNB1 binds to the GDP bound form of RAN (Ran-GDP) and targets Rev to the nucleus. In the nucleus, the conversion from Ran-GDP to Ran-GTP dissociates Rev from KPNB1 and allows Rev's binding to the RRE in viral pre-mRNAs. Rev multimerization on the RRE via cooperative assembly exposes its nuclear export signal (NES) to the surface. Rev can then form a complex with XPO1/CRM1 and Ran-GTP, leading to nuclear export of the complex. Conversion from Ran-GTP to Ran-GDP mediates dissociation of the Rev/RRE/XPO1/RAN complex, so that Rev can return to the nucleus for a subsequent round of export. Beside KPNB1, also seems to interact with TNPO1/Transportin-1, RANBP5/IPO5 and IPO7/RANBP7 for nuclear import. The nucleoporin-like HRB/RIP is an essential cofactor that probably indirectly interacts with Rev to release HIV RNAs from the perinuclear region to the cytoplasm. The chain is Protein Rev from Human immunodeficiency virus type 1 group M subtype B (isolate HXB3) (HIV-1).